Consider the following 351-residue polypeptide: Selenide, water dikinase (351 aa).

Sec15 is an active-site residue. Position 15 (Sec15) is a non-standard amino acid, selenocysteine. Residues Lys18 and 47–49 each bind ATP; that span reads DNE. Asp50 is a binding site for Mg(2+). ATP-binding positions include Asp67, Asp90, and 138 to 140; that span reads GHS. Asp90 contributes to the Mg(2+) binding site. Asp227 is a Mg(2+) binding site.

Belongs to the selenophosphate synthase 1 family. Class I subfamily. Homodimer. The cofactor is Mg(2+).

It catalyses the reaction hydrogenselenide + ATP + H2O = selenophosphate + AMP + phosphate + 2 H(+). Functionally, synthesizes selenophosphate from selenide and ATP. The sequence is that of Selenide, water dikinase from Nitratidesulfovibrio vulgaris (strain ATCC 29579 / DSM 644 / CCUG 34227 / NCIMB 8303 / VKM B-1760 / Hildenborough) (Desulfovibrio vulgaris).